A 459-amino-acid polypeptide reads, in one-letter code: tRNA modification GTPase MnmE (459 aa).

(6S)-5-formyl-5,6,7,8-tetrahydrofolate-binding residues include Arg-29, Glu-91, and Arg-130. The TrmE-type G domain occupies Gly-225 to Thr-381. Asn-235 is a binding site for K(+). Residues Asn-235–Ser-240, Thr-254–Thr-260, and Asp-279–Gly-282 contribute to the GTP site. Ser-239 is a binding site for Mg(2+). K(+) contacts are provided by Thr-254, Leu-256, and Thr-259. Residue Thr-260 coordinates Mg(2+). Residue Lys-459 coordinates (6S)-5-formyl-5,6,7,8-tetrahydrofolate.

This sequence belongs to the TRAFAC class TrmE-Era-EngA-EngB-Septin-like GTPase superfamily. TrmE GTPase family. As to quaternary structure, homodimer. Heterotetramer of two MnmE and two MnmG subunits. It depends on K(+) as a cofactor.

The protein resides in the cytoplasm. In terms of biological role, exhibits a very high intrinsic GTPase hydrolysis rate. Involved in the addition of a carboxymethylaminomethyl (cmnm) group at the wobble position (U34) of certain tRNAs, forming tRNA-cmnm(5)s(2)U34. This Synechococcus sp. (strain JA-2-3B'a(2-13)) (Cyanobacteria bacterium Yellowstone B-Prime) protein is tRNA modification GTPase MnmE.